The following is a 558-amino-acid chain: Atlastin-1 (558 aa).

Residues 1–27 are disordered; it reads MAKNRRDRNSWGGFSEKTYEWSSEEEE. The tract at residues 1-34 is N-terminal hypervariable region (HVR); sequence MAKNRRDRNSWGGFSEKTYEWSSEEEEPVKKAGP. At 1–449 the chain is on the cytoplasmic side; sequence MAKNRRDRNS…NIFHAARTPA (449 aa). Phosphoserine occurs at positions 10, 22, and 23. The 246-residue stretch at 64-309 folds into the GB1/RHD3-type G domain; it reads DKEVVAVSVA…LIPWLLSPES (246 aa). Positions 77, 78, 79, 80, 81, 82, 148, 217, 218, 276, and 279 each coordinate GDP. 6 residues coordinate GTP: Arg-77, Lys-78, Gly-79, Lys-80, Ser-81, and Phe-82. Ser-81 provides a ligand contact to Mg(2+). Positions 217, 218, and 276 each coordinate GTP. Residues 347-438 are 3HB (three-helix bundle) domain; sequence MLQATAEANN…YIQYIKHNDS (92 aa). The residue at position 395 (Lys-395) is an N6-acetyllysine. Positions 412 to 439 form a coiled coil; sequence EFSRRYLQQLESEIDELYIQYIKHNDSK. The segment at 439–447 is linker; that stretch reads KNIFHAART. Residues 450–470 traverse the membrane as a helical segment; sequence TLFVVIFITYVIAGVTGFIGL. A topological domain (lumenal) is located at residue Asp-471. Residues 472-492 form a helical membrane-spanning segment; it reads IIASLCNMIMGLTLITLCTWA. Over 493-558 the chain is Cytoplasmic; it reads YIRYSGEYRE…STEQSEKKKM (66 aa). Residues 521 to 558 are autoinhibitory domain; the sequence is NEALYKLYSAAATHRHLYHQAFPTPKSESTEQSEKKKM.

This sequence belongs to the TRAFAC class dynamin-like GTPase superfamily. GB1/RHD3 GTPase family. GB1 subfamily. In terms of assembly, monomeric and homodimeric. The homodimer, transiently formed by two molecules on opposing membranes, is the active form mediating ER membrane fusion. Interacts with REEP1, REEP5, RTN3 and RTN4 (via the transmembrane region); these proteins are involved in endoplasmic reticulum tubular network organization. Interacts with ZFYVE27; both proteins are involved in endoplasmic reticulum tubular network organization. Interacts with ARL6IP1; both proteins are involved in endoplasmic reticulum tubular network organization. Interacts with SPAST; the interaction is direct, could recruit SPAST to Golgi membranes. Interacts (via N-terminal region) with MAP4K4 (via CNH regulatory domain). May interact with TMED2. Interacts with CPT1C. In terms of processing, phosphorylated. Phosphorylation, by different kinases, of the N-terminal hypervariable region (HVR) regulates the ATL1-mediated membrane tethering step.

The protein localises to the endoplasmic reticulum membrane. The protein resides in the golgi apparatus membrane. It localises to the cell projection. It is found in the axon. It carries out the reaction GTP + H2O = GDP + phosphate + H(+). In terms of biological role, atlastin-1 (ATL1) is a membrane-anchored GTPase that mediates the GTP-dependent fusion of endoplasmic reticulum (ER) membranes, maintaining the continuous ER network. It facilitates the formation of three-way junctions where ER tubules intersect. Two atlastin-1 on neighboring ER tubules bind GTP and form loose homodimers through the GB1/RHD3-type G domains and 3HB regions. Upon GTP hydrolysis, the 3HB regions tighten, pulling the membranes together to drive their fusion. After fusion, the homodimer disassembles upon release of inorganic phosphate (Pi). Subsequently, GDP dissociates, resetting the monomers to a conformation ready for a new fusion cycle. May also regulate more or less directly Golgi biogenesis. Indirectly regulates axonal development. This Macaca fascicularis (Crab-eating macaque) protein is Atlastin-1.